The primary structure comprises 466 residues: Vimentin (466 aa).

Composition is skewed to low complexity over residues 1 to 13 (MSTR…SYRR) and 20 to 33 (TSSR…YVTT). Residues 1 to 33 (MSTRSVSSSSYRRMFGGSGTSSRPSSNRSYVTT) form a disordered region. An N-acetylserine modification is found at Ser-2. Positions 2 to 95 (STRSVSSSSY…FSLADAINTE (94 aa)) are head. Ser-5 carries the phosphoserine modification. Ser-7 carries the phosphoserine; by PKA and PKC; alternate modification. Residue Ser-7 is glycosylated (O-linked (GlcNAc) serine; alternate). Position 8 is a phosphoserine (Ser-8). Phosphoserine; by PKC is present on residues Ser-9 and Ser-10. Phosphothreonine is present on Thr-20. Residue Ser-21 is modified to Phosphoserine; by PKC. Ser-25 bears the Phosphoserine; by PKA and PKC mark. Residue Ser-26 is modified to Phosphoserine; by PKC. Residue Thr-33 is glycosylated (O-linked (GlcNAc) threonine). Residue Ser-34 is glycosylated (O-linked (GlcNAc) serine; alternate). Ser-34 carries the phosphoserine; by PKC; alternate modification. A Phosphoserine; by CaMK2, PKA, PKC and ROCK2 modification is found at Ser-39. Position 42 is a phosphoserine; by PKC (Ser-42). Position 47 is a phosphoserine; by PKA (Ser-47). A Phosphoserine modification is found at Ser-49. Ser-51 carries the post-translational modification Phosphoserine; by PKA and PKC. Phosphotyrosine is present on Tyr-53. Residues Ser-55 and Ser-56 each carry the phosphoserine modification. Tyr-61 is modified (phosphotyrosine). Residue Ser-66 is modified to Phosphoserine; by PKA and PKC. At Ser-72 the chain carries Phosphoserine; by AURKB and ROCK2. Residue Ser-73 is modified to Phosphoserine. Ser-83 bears the Phosphoserine; by CaMK2 mark. Position 87 is a phosphoserine (Ser-87). Residues 96-131 (FKNTRTNEKVELQELNDRFANYIDKVRFLEQQNKIL) form a coil 1A region. The stretch at 96–131 (FKNTRTNEKVELQELNDRFANYIDKVRFLEQQNKIL) forms a coiled coil. Residues 103–411 (EKVELQELND…KLLEGEESRI (309 aa)) enclose the IF rod domain. Lys-104 participates in a covalent cross-link: Glycyl lysine isopeptide (Lys-Gly) (interchain with G-Cter in SUMO2). Tyr-117 carries the post-translational modification Phosphotyrosine. N6-acetyllysine; alternate is present on residues Lys-120, Lys-129, and Lys-139. N6-succinyllysine; alternate is present on residues Lys-120 and Lys-129. Residues Lys-120, Lys-129, and Lys-139 each participate in a glycyl lysine isopeptide (Lys-Gly) (interchain with G-Cter in SUMO2); alternate cross-link. The interval 132 to 153 (LAELEQLKGQGKSRLGDLYEEE) is linker 1. Ser-144 is modified (phosphoserine). The stretch at 154–245 (MRELRRQVDQ…KLHDEEIQEL (92 aa)) forms a coiled coil. The interval 154-245 (MRELRRQVDQ…KLHDEEIQEL (92 aa)) is coil 1B. Residue Lys-168 is modified to N6-acetyllysine. Lys-188 bears the N6-acetyllysine; alternate mark. Residue Lys-188 is modified to N6-succinyllysine; alternate. Residue Ser-214 is modified to Phosphoserine. N6-acetyllysine; alternate is present on Lys-223. Lys-223 is covalently cross-linked (Glycyl lysine isopeptide (Lys-Gly) (interchain with G-Cter in SUMO2); alternate). Ser-226 bears the Phosphoserine mark. At Lys-235 the chain carries N6-acetyllysine. The tract at residues 246 to 268 (QAQIQEQHVQIDVDVSKPDLTAA) is linker 12. Lys-262 participates in a covalent cross-link: Glycyl lysine isopeptide (Lys-Gly) (interchain with G-Cter in SUMO2). The tract at residues 269–407 (LRDVRQQYES…ATYRKLLEGE (139 aa)) is coil 2. An N6-acetyllysine; alternate modification is found at Lys-294. The residue at position 294 (Lys-294) is an N6-succinyllysine; alternate. Lys-294 is covalently cross-linked (Glycyl lysine isopeptide (Lys-Gly) (interchain with G-Cter in SUMO2); alternate). Ser-299 is modified (phosphoserine). Residues 303-407 (NRNNDALRQA…ATYRKLLEGE (105 aa)) adopt a coiled-coil conformation. Lys-313 participates in a covalent cross-link: Glycyl lysine isopeptide (Lys-Gly) (interchain with G-Cter in SUMO2). Position 325 is a phosphoserine (Ser-325). Residues 326–329 (LTCE) carry the [IL]-x-C-x-x-[DE] motif motif. Lys-373 is subject to N6-acetyllysine; alternate. Lys-373 participates in a covalent cross-link: Glycyl lysine isopeptide (Lys-Gly) (interchain with G-Cter in SUMO2); alternate. A tail region spans residues 408–466 (ESRISLPLPTFSSLNLRETNLESLPLVDTHSKRTLLIKTVETRDGQVINETSQHHDDLE). Phosphoserine occurs at positions 409, 412, 419, and 420. The residue at position 426 (Thr-426) is a Phosphothreonine. A Phosphoserine modification is found at Ser-430. At Thr-436 the chain carries Phosphothreonine. Ser-438 is subject to Phosphoserine. Residue Lys-439 forms a Glycyl lysine isopeptide (Lys-Gly) (interchain with G-Cter in SUMO2) linkage. Lys-445 bears the N6-acetyllysine; alternate mark. Residue Lys-445 is modified to N6-succinyllysine; alternate. Lys-445 is covalently cross-linked (Glycyl lysine isopeptide (Lys-Gly) (interchain with G-Cter in SUMO2); alternate). Lys-445 participates in a covalent cross-link: Glycyl lysine isopeptide (Lys-Gly) (interchain with G-Cter in SUMO1); alternate. Phosphothreonine occurs at positions 446 and 458. Residue Ser-459 is modified to Phosphoserine.

This sequence belongs to the intermediate filament family. As to quaternary structure, homomer assembled from elementary dimers. Identified in complexes that contain VIM, EZR, AHNAK, BFSP1, BFSP2, ANK2, PLEC, PRX and spectrin. Interacts with BCAS3. Interacts with LGSN. Interacts with SYNM. Interacts (via rod region) with PLEC (via CH 1 domain). Interacts with PLEC isoform 1C. Interacts with STK33. Interacts with LARP6. Interacts with RAB8B. Interacts with TOR1A; the interaction associates TOR1A with the cytoskeleton. Interacts with TOR1AIP1. Interacts with DIAPH1. Interacts with EPPK1; interaction is dependent of higher-order structure of intermediate filament. Interacts with the non-receptor tyrosine kinase SRMS; the interaction leads to phosphorylation of VIM. Interacts with NOD2. Interacts (via head region) with CORO1C. Interacts with HDGF. Interacts with PRKCE (via phorbol-ester/DAG-type 2 domain). Interacts with BFSP2. Interacts with PPL. Interacts with PKP1 and PKP2. Interacts with SCRIB (via PDZ domains); the interaction protects SCRIB from proteasomal degradation and facilitates SCRIB localization to intermediate filaments, the interaction is reduced by cell contact inhibition. In terms of processing, phosphorylation by PKN1 inhibits the formation of filaments. Filament disassembly during mitosis is promoted by phosphorylation at Ser-55 as well as by nestin. One of the most prominent phosphoproteins in various cells of mesenchymal origin. Phosphorylation is enhanced during cell division, at which time vimentin filaments are significantly reorganized. Phosphorylated at Ser-56 by CDK5 during neutrophil secretion in the cytoplasm. Phosphorylated by STK33. Phosphorylated on tyrosine residues by SRMS. Post-translationally, S-nitrosylation is induced by interferon-gamma and oxidatively-modified low-densitity lipoprotein (LDL(ox)) possibly implicating the iNOS-S100A8/9 transnitrosylase complex. Detected in eye lens fiber cells (at protein level). Expressed in retinal lens epithelial cells (at protein level). Expressed in Langerhans cells in the epidermis (at protein level).

The protein resides in the cytoplasm. It is found in the cytoskeleton. It localises to the nucleus matrix. Its subcellular location is the cell membrane. In terms of biological role, vimentins are class-III intermediate filaments found in various non-epithelial cells, especially mesenchymal cells. Vimentin is attached to the nucleus, endoplasmic reticulum, and mitochondria, either laterally or terminally. Plays a role in cell directional movement, orientation, cell sheet organization and Golgi complex polarization at the cell migration front. Protects SCRIB from proteasomal degradation and facilitates its localization to intermediate filaments in a cell contact-mediated manner. Its function is as follows. Involved with LARP6 in the stabilization of type I collagen mRNAs for CO1A1 and CO1A2. This is Vimentin from Mus musculus (Mouse).